The primary structure comprises 1781 residues: Chitin synthase 7 (1781 aa).

6 N-linked (GlcNAc...) asparagine glycosylation sites follow: N133, N534, N629, N644, N655, and N660. 2 helical membrane passes run 741-761 (AWVAFVWALTFWIPSPLLKFV) and 777-797 (LVLFFIILLLNGLIIFWIIGF). N889 and N1011 each carry an N-linked (GlcNAc...) asparagine glycan. Residues 1048 to 1068 (LLLAFAIIICIVTAVKFLAAL) form a helical membrane-spanning segment. An N-linked (GlcNAc...) asparagine glycan is attached at N1413. The next 3 membrane-spanning stretches (helical) occupy residues 1444-1464 (LTGTIILPSTTVYIGYLIYVL), 1471-1491 (IPYISLAMIGAVYGHQALIFI), and 1499-1519 (IGWMIIYILAFPIYSFILPLY). Residue N1526 is glycosylated (N-linked (GlcNAc...) asparagine). A disordered region spans residues 1677-1712 (QANLSPAAGGGHSRSGTALGFSSGSRSPMPDAMRSQ). Residues 1690–1702 (RSGTALGFSSGSR) are compositionally biased toward polar residues. The DEK-C domain occupies 1723-1779 (GPTDMAIVESIRSVLCEVDLDTVTKKQVRALVEQRLQTELVGERRTFMDRQIDHELE).

Belongs to the chitin synthase family. Class V subfamily.

The protein localises to the cell membrane. It carries out the reaction [(1-&gt;4)-N-acetyl-beta-D-glucosaminyl](n) + UDP-N-acetyl-alpha-D-glucosamine = [(1-&gt;4)-N-acetyl-beta-D-glucosaminyl](n+1) + UDP + H(+). Its function is as follows. Polymerizes chitin, a structural polymer of the cell wall and septum, by transferring the sugar moiety of UDP-GlcNAc to the non-reducing end of the growing chitin polymer. Shows additive effects in septum formation with CHS1, CHS2, CHS3A, CHS4, CHS5 and CHS6. Indispensable for perithecia formation and regulates conidiation. Plays an important role in the response to cell wall stress. Also required for hyphal growth and pathogenicity. This chain is Chitin synthase 7, found in Gibberella zeae (strain ATCC MYA-4620 / CBS 123657 / FGSC 9075 / NRRL 31084 / PH-1) (Wheat head blight fungus).